The following is a 30-amino-acid chain: Conotoxin Bt12.1 (30 aa).

In terms of processing, contains 3 disulfide bonds. Expressed by the venom duct.

The protein localises to the secreted. This Conus betulinus (Beech cone) protein is Conotoxin Bt12.1.